Consider the following 212-residue polypeptide: Thymidylate kinase (212 aa).

11–18 (GPEGAGKT) contacts ATP.

The protein belongs to the thymidylate kinase family.

The catalysed reaction is dTMP + ATP = dTDP + ADP. Functionally, phosphorylation of dTMP to form dTDP in both de novo and salvage pathways of dTTP synthesis. The chain is Thymidylate kinase from Streptococcus pneumoniae (strain CGSP14).